The primary structure comprises 245 residues: Orotidine 5'-phosphate decarboxylase (245 aa).

Substrate contacts are provided by residues aspartate 22, lysine 44, 71–80, threonine 131, arginine 192, glutamine 201, glycine 221, and arginine 222; that span reads DLKFHDIPNT. Lysine 73 acts as the Proton donor in catalysis.

This sequence belongs to the OMP decarboxylase family. Type 1 subfamily. Homodimer.

It catalyses the reaction orotidine 5'-phosphate + H(+) = UMP + CO2. The protein operates within pyrimidine metabolism; UMP biosynthesis via de novo pathway; UMP from orotate: step 2/2. Functionally, catalyzes the decarboxylation of orotidine 5'-monophosphate (OMP) to uridine 5'-monophosphate (UMP). The sequence is that of Orotidine 5'-phosphate decarboxylase from Salmonella typhimurium (strain LT2 / SGSC1412 / ATCC 700720).